Here is a 224-residue protein sequence, read N- to C-terminus: CASP-like protein 3A1 (224 aa).

At 1–59 the chain is on the cytoplasmic side; it reads MMMNGQKLAPAAEVAVQLPESKVAADNISGTMSGPLVGASGGGTTAAMRPFGRKAEVMH. The helical transmembrane segment at 60-80 threads the bilayer; the sequence is VLLRLLCIITSVAALSFMFTA. The Extracellular portion of the chain corresponds to 81 to 106; it reads QQSSTISIYGFMLPVQSKWSFSHSFE. A helical membrane pass occupies residues 107–127; that stretch reads YLVGVSAAVAAHSLLQLLISM. Over 128 to 142 the chain is Cytoplasmic; the sequence is SRLLRKSPVIPSRSH. A helical transmembrane segment spans residues 143 to 163; that stretch reads AWLIFAGDQVFAYAMISAGAA. The Extracellular segment spans residues 164-192; that stretch reads ASGVTNLNRTGIQHTALPNFCKPLQSFCD. An N-linked (GlcNAc...) asparagine glycan is attached at Asn171. A helical membrane pass occupies residues 193–213; that stretch reads HVAVSIFFTFTSCFLLAASAV. Over 214 to 224 the chain is Cytoplasmic; the sequence is QEVIWLSRSKY.

This sequence belongs to the Casparian strip membrane proteins (CASP) family. Homodimer and heterodimers.

It localises to the cell membrane. This Populus trichocarpa (Western balsam poplar) protein is CASP-like protein 3A1.